Reading from the N-terminus, the 420-residue chain is DNA primase small subunit (420 aa).

Met-1 is modified (N-acetylmethionine). Catalysis depends on residues Glu-44, Asp-109, and Asp-111. Mg(2+) is bound by residues Asp-109 and Asp-111. Mn(2+) is bound by residues Asp-109 and Asp-111. Residue Asp-109–Asp-111 participates in a ribonucleoside 5'-triphosphate binding. Residues Cys-121, Cys-122, Cys-128, and Cys-131 each coordinate Zn(2+). The Zinc knuckle motif signature appears at Cys-121 to Cys-131. Ser-160 to His-166 is a binding site for a ribonucleoside 5'-triphosphate. Residue Asp-306 participates in Mg(2+) binding. Asp-306 lines the Mn(2+) pocket. A ribonucleoside 5'-triphosphate is bound by residues His-315–Lys-318 and His-324. Residues Asn-363–Glu-373 are compositionally biased toward acidic residues. The disordered stretch occupies residues Asn-363 to Asp-382.

The protein belongs to the eukaryotic-type primase small subunit family. In terms of assembly, heterodimer of a catalytic subunit PRIM1 and a regulatory subunit PRIM2, also known as the DNA primase complex. Interacts with PRIM2 (via C-terminus). Component of the alpha DNA polymerase complex (also known as the alpha DNA polymerase-primase complex) consisting of four subunits: the catalytic subunit POLA1, the regulatory subunit POLA2, and the primase complex subunits PRIM1 and PRIM2 respectively. Within the complex, POLA1 directly interacts with PRIM2. It depends on Mg(2+) as a cofactor. The cofactor is Mn(2+).

The catalysed reaction is ssDNA + n NTP = ssDNA/pppN(pN)n-1 hybrid + (n-1) diphosphate.. Its activity is regulated as follows. The presence of the regulatory subunit PRIM2/p58 accelerates the kinetics of initiation and primer extension. Inhibited by arabinose nucleoside derivatives such as fludarabine and vidarabine. Functionally, catalytic subunit of the DNA primase complex and component of the DNA polymerase alpha complex (also known as the alpha DNA polymerase-primase complex - primosome/replisome) which play an essential role in the initiation of DNA synthesis. During the S phase of the cell cycle, the DNA polymerase alpha complex (composed of a catalytic subunit POLA1, an accessory subunit POLA2 and two primase subunits, the catalytic subunit PRIM1 and the regulatory subunit PRIM2) is recruited to DNA at the replicative forks via direct interactions with MCM10 and WDHD1. The primase subunit of the polymerase alpha complex initiates DNA synthesis by oligomerising short RNA primers on both leading and lagging strands. These primers are initially extended by the polymerase alpha catalytic subunit and subsequently transferred to polymerase delta and polymerase epsilon for processive synthesis on the lagging and leading strand, respectively. In the primase complex, both subunits are necessary for the initial di-nucleotide formation, but the extension of the primer depends only on the catalytic subunit. Synthesizes 9-mer RNA primers (also known as the 'unit length' RNA primers). Incorporates only ribonucleotides in the presence of ribo- and deoxy-nucleotide triphosphates (rNTPs, dNTPs). Requires template thymine or cytidine to start the RNA primer synthesis, with an adenine or guanine at its 5'-end. Binds single stranded DNA. The chain is DNA primase small subunit (PRIM1) from Homo sapiens (Human).